The chain runs to 436 residues: GTPase Der (436 aa).

EngA-type G domains lie at 4–167 and 176–351; these read PTIA…PEQQ and IKFS…ENHR. Residues 10 to 17, 57 to 61, 119 to 122, 182 to 189, 229 to 233, and 294 to 297 contribute to the GTP site; these read GRANVGKS, DTGGI, NKID, GRPNVGKS, DTAGM, and NKWD. The KH-like domain occupies 352 to 436; the sequence is KRVQSSTLNE…PLHLIARKRN (85 aa).

Belongs to the TRAFAC class TrmE-Era-EngA-EngB-Septin-like GTPase superfamily. EngA (Der) GTPase family. As to quaternary structure, associates with the 50S ribosomal subunit.

GTPase that plays an essential role in the late steps of ribosome biogenesis. The sequence is that of GTPase Der from Macrococcus caseolyticus (strain JCSC5402) (Macrococcoides caseolyticum).